A 590-amino-acid polypeptide reads, in one-letter code: Cyclin-dependent kinase-like 3 (590 aa).

The region spanning 4–286 (YETLGKVGEG…SSDLLHHEYF (283 aa)) is the Protein kinase domain. ATP is bound by residues 10 to 18 (VGEGSYGTV) and lysine 33. The [NKR]KIAxRE motif lies at 45-51 (KIAMREI). Aspartate 125 acts as the Proton acceptor in catalysis. A Phosphothreonine modification is found at threonine 158. Tyrosine 160 bears the Phosphotyrosine mark. Disordered stretches follow at residues 459–508 (RAKK…SNEN) and 547–590 (LKRE…PDVE). Over residues 466-477 (SSQSIGQVMPNS) the composition is skewed to polar residues. Basic and acidic residues-rich tracts occupy residues 547–556 (LKRESKKTDS) and 580–590 (TERKKNLPDVE).

Belongs to the protein kinase superfamily. CMGC Ser/Thr protein kinase family. CDC2/CDKX subfamily.

The protein localises to the cytoplasm. It carries out the reaction L-seryl-[protein] + ATP = O-phospho-L-seryl-[protein] + ADP + H(+). The enzyme catalyses L-threonyl-[protein] + ATP = O-phospho-L-threonyl-[protein] + ADP + H(+). The polypeptide is Cyclin-dependent kinase-like 3 (Macaca fascicularis (Crab-eating macaque)).